Reading from the N-terminus, the 722-residue chain is Catalase B (722 aa).

Positions 1-15 (MRALGLVGLVGVANA) are cleaved as a signal peptide. Residues H100 and N173 contribute to the active site. Y388 serves as a coordination point for heme.

This sequence belongs to the catalase family. Heme is required as a cofactor.

It localises to the secreted. The enzyme catalyses 2 H2O2 = O2 + 2 H2O. Occurs in almost all aerobically respiring organisms and serves to protect cells from the toxic effects of hydrogen peroxide. This Emericella nidulans (strain FGSC A4 / ATCC 38163 / CBS 112.46 / NRRL 194 / M139) (Aspergillus nidulans) protein is Catalase B (catB).